We begin with the raw amino-acid sequence, 319 residues long: uncharacterized protein (319 aa).

This is an uncharacterized protein from Ictalurid herpesvirus 1 (strain Auburn) (IcHV-1).